Reading from the N-terminus, the 312-residue chain is Serine protease 48 (312 aa).

The first 22 residues, Met1 to Thr22, serve as a signal peptide directing secretion. The Peptidase S1 domain occupies Ile40–Ser276. An intrachain disulfide couples Cys65 to Cys81. Residues His80 and Asp126 each act as charge relay system in the active site. A glycan (N-linked (GlcNAc...) asparagine) is linked at Asn149. Intrachain disulfides connect Cys160–Cys235, Cys190–Cys214, and Cys225–Cys253. Ser229 functions as the Charge relay system in the catalytic mechanism. N-linked (GlcNAc...) asparagine glycosylation occurs at Asn263.

The protein belongs to the peptidase S1 family.

Its subcellular location is the secreted. This Mus musculus (Mouse) protein is Serine protease 48 (Prss48).